Consider the following 205-residue polypeptide: GTP cyclohydrolase-2 (205 aa).

49 to 53 contributes to the GTP binding site; that stretch reads RVHSE. Cysteine 54, cysteine 65, and cysteine 67 together coordinate Zn(2+). Residues glutamine 70, 92-94, and threonine 114 each bind GTP; that span reads EGR. Catalysis depends on aspartate 126, which acts as the Proton acceptor. Arginine 128 acts as the Nucleophile in catalysis. 2 residues coordinate GTP: threonine 149 and lysine 154.

Belongs to the GTP cyclohydrolase II family. It depends on Zn(2+) as a cofactor.

The catalysed reaction is GTP + 4 H2O = 2,5-diamino-6-hydroxy-4-(5-phosphoribosylamino)-pyrimidine + formate + 2 phosphate + 3 H(+). Its pathway is cofactor biosynthesis; riboflavin biosynthesis; 5-amino-6-(D-ribitylamino)uracil from GTP: step 1/4. Catalyzes the conversion of GTP to 2,5-diamino-6-ribosylamino-4(3H)-pyrimidinone 5'-phosphate (DARP), formate and pyrophosphate. The sequence is that of GTP cyclohydrolase-2 from Pseudomonas fluorescens (strain SBW25).